Reading from the N-terminus, the 124-residue chain is Putative iron-sulfur cluster insertion protein ErpA 2 (124 aa).

C52, C116, and C118 together coordinate iron-sulfur cluster.

It belongs to the HesB/IscA family. In terms of assembly, homodimer. Requires iron-sulfur cluster as cofactor.

Functionally, required for insertion of 4Fe-4S clusters. This chain is Putative iron-sulfur cluster insertion protein ErpA 2, found in Burkholderia vietnamiensis (strain G4 / LMG 22486) (Burkholderia cepacia (strain R1808)).